A 2151-amino-acid chain; its full sequence is Polycystin-1-like protein 3 (2151 aa).

The N-terminal stretch at 1–20 (MLLQRRSWLWLYIRIGVILG) is a signal peptide. The Extracellular portion of the chain corresponds to 25 to 1073 (RKPSIREQHG…IKLLLHVTNN (1049 aa)). Positions 34–142 (GGNSCYQLNR…CIEKHHFICQ (109 aa)) constitute a C-type lectin domain. Disulfide bonds link cysteine 55–cysteine 141 and cysteine 116–cysteine 133. An N-linked (GlcNAc...) asparagine glycan is attached at asparagine 89. Residues 222–245 (SLTGRPQVTSDTLASSSPPQGTSD) are compositionally biased toward polar residues. Positions 222–609 (SLTGRPQVTS…SSSPPWPVIT (388 aa)) are disordered. Low complexity predominate over residues 246–348 (TPASSSPPQV…ASSSPPQGTS (103 aa)). Composition is skewed to polar residues over residues 349-363 (DTPA…TLDT) and 371-600 (QGTS…TPAS). N-linked (GlcNAc...) asparagine glycosylation is found at asparagine 566, asparagine 579, asparagine 592, asparagine 913, and asparagine 951. The GAIN-B domain maps to 899–1061 (TSLNTSTDHF…FIVPRTVDVE (163 aa)). Intrachain disulfides connect cysteine 1011-cysteine 1039 and cysteine 1026-cysteine 1041. The tract at residues 1011 to 1061 (CYFWDRYNRTWKSDGCQVGPKSTILKTQCLCDHLTFFSSDFFIVPRTVDVE) is GPS. Residues 1045–1061 (TFFSSDFFIVPRTVDVE) are stachel. The chain crosses the membrane as a helical span at residues 1074–1094 (PVGVSLLSSLLGFYILLAMWA). Residues 1095–1283 (SRKDREDMQK…NQFTRVQRLS (189 aa)) lie on the Cytoplasmic side of the membrane. The PLAT domain occupies 1119-1236 (SHYLIQVYTG…GNCERDRVFT (118 aa)). The chain crosses the membrane as a helical span at residues 1284 to 1304 (CCMALLLCDMVINIMFWKMGG). Topologically, residues 1305–1320 (TTAKRGTEQLGPLAVT) are extracellular. A helical transmembrane segment spans residues 1321 to 1341 (LSELLVSIQTSIILFPIHLIF). At 1342–1533 (GRLFQLIHPP…FCLFRWLKCS (192 aa)) the chain is on the cytoplasmic side. A helical transmembrane segment spans residues 1534 to 1554 (CWLLLGVISLASAFFITLYSL). Residues 1555–1575 (ELDKDQATSWVISMMLSVLQD) lie on the Extracellular side of the membrane. Residues 1576-1596 (IFISQPIKVIFLTLLFSLMAN) traverse the membrane as a helical segment. The Cytoplasmic segment spans residues 1597-1665 (HMPWLNKDKE…KLTGGTLVQI (69 aa)). Residues 1666–1676 (LFLTLLMTTVY) form a helical membrane-spanning segment. Residues 1677 to 1892 (SAKDSSRFFL…SLTSLQSSER (216 aa)) lie on the Extracellular side of the membrane. Residues asparagine 1712 and asparagine 1822 are each glycosylated (N-linked (GlcNAc) asparagine). A helical transmembrane segment spans residues 1893-1921 (GFAWIVSQVVYYLLVCYYAFIQGCRLKRQ). Residues 1922-1930 (RLAFFTRKR) lie on the Cytoplasmic side of the membrane. A helical transmembrane segment spans residues 1931–1949 (NLLDTSIVLISFSILGLSM). The Extracellular portion of the chain corresponds to 1950-1980 (QSLSLLHKKMQQYHCDRDRFISFYEALRVNS). A helical membrane pass occupies residues 1981–2002 (AVTHLRGFLLLFATVRVWDLLR). Topologically, residues 2003–2019 (HHAQLQVINKTLSKAWD) are cytoplasmic. A helical transmembrane segment spans residues 2020–2044 (EVLGFILIIVVLLSSYAMTFNLLFG). Positions 2043 to 2081 (FGWSISDYQSFFRSIVTVVGLLMGTSKHKEVIALYPILG) are channel pore-region. At 2045 to 2077 (WSISDYQSFFRSIVTVVGLLMGTSKHKEVIALY) the chain is on the extracellular side. The helical transmembrane segment at 2078–2097 (PILGSLLVLSSIILMGLVII) threads the bilayer. Residues 2098-2151 (NLFVSAILIAFGKERKACEKEATLTDMLLQKLSSLLGIRLHQNPSEEHADNTGY) are Cytoplasmic-facing.

Belongs to the polycystin family. In terms of assembly, heterotetramer with PKD2L1, composed of 3 subunit of PKD2L1 and 1 subunit of PKD1L3. In terms of processing, autoproteolytically processed at the GPS region of the GAIN-B domain; this cleavage modulates receptor activity. Expressed in a subset of taste receptor cells (type III taste cells) distinct from those involved in bitter, sweet and umami taste. Expressed in circumvallate and foliate taste buds, but not in surrounding non-gustatory lingual epithelium cells. Expressed in testis.

It localises to the cell membrane. It catalyses the reaction Ca(2+)(in) = Ca(2+)(out). It carries out the reaction Na(+)(in) = Na(+)(out). The catalysed reaction is K(+)(in) = K(+)(out). The enzyme catalyses Mg(2+)(in) = Mg(2+)(out). With respect to regulation, the non-selective cation channel is gated following an off-response property by acid: gated open after the removal of acid stimulus, but not during acid application. Non-selective cation channel activity is inhibited by capsaicin. Regulation of non-selective cation channel activity by external Ca(2+) is bimodal, first sensitizing and subsequently inactivating the current. The apo (closed) heterotetramer has an asymmetric selectivity filter (SF) guarded by Lys-2069 in absence of Ca(2+). However, Ca(2+)-entrance to the SF vestibule is accompanied by a swing motion of Lys-2069 on PKD1L3. In terms of biological role, pore-forming subunit of a heterotetrameric, non-selective cation channel that is permeable to Ca(2+). Also shows permeability towards NA(1+), K(+) and Mg(2+). Heterotetrameric complex channel is activated by external low pH and Ca(2+), but opens only when the extracellular pH rises again and after the removal of acid stimulus. May act as a sour taste receptor in gustatory cells; however, its contribution to sour taste perception is unclear in vivo and may be indirect. This chain is Polycystin-1-like protein 3, found in Mus musculus (Mouse).